The primary structure comprises 964 residues: Syndetin (964 aa).

At M1 the chain carries N-acetylmethionine. Positions 1–25 (MQKIKSLMTRQGLKSPPESLNDLGA) are disordered. S15 is modified (phosphoserine). Coiled-coil stretches lie at residues 81 to 107 (LNLQ…VADL) and 216 to 244 (YSCI…LSKI). Phosphoserine is present on residues S494, S498, S559, and S561. A disordered region spans residues 532-563 (DEETEDVLASNGYESDEQEKSAYQDYDSDSDV). K963 is covalently cross-linked (Glycyl lysine isopeptide (Lys-Gly) (interchain with G-Cter in SUMO1); alternate). A Glycyl lysine isopeptide (Lys-Gly) (interchain with G-Cter in SUMO2); alternate cross-link involves residue K963.

This sequence belongs to the syndetin family. As to quaternary structure, component of the endosome-associated retrograde protein (EARP) complex, composed of VPS51, VPS52, VPS53 and VPS50/Syndetin. The EARP complex interacts with EIPR1. Interacts with VPS51 and VPS53 in an EIPR1-independent manner. Expressed in the brain (at protein level).

It is found in the recycling endosome. The protein localises to the membrane. Its function is as follows. Acts as a component of the EARP complex that is involved in endocytic recycling. The EARP complex associates with Rab4-positive endosomes and promotes recycling of internalized transferrin receptor (TFRC) to the plasma membrane. Within the EARP complex, required to tether the complex to recycling endosomes. Not involved in retrograde transport from early and late endosomes to the trans-Golgi network (TGN). This is Syndetin from Rattus norvegicus (Rat).